We begin with the raw amino-acid sequence, 274 residues long: Ethanolamine ammonia-lyase small subunit (274 aa).

Adenosylcob(III)alamin contacts are provided by valine 161, glutamate 182, and cysteine 211.

Belongs to the EutC family. The basic unit is a heterodimer which dimerizes to form tetramers. The heterotetramers trimerize; 6 large subunits form a core ring with 6 small subunits projecting outwards. It depends on adenosylcob(III)alamin as a cofactor.

The protein localises to the bacterial microcompartment. The enzyme catalyses ethanolamine = acetaldehyde + NH4(+). It participates in amine and polyamine degradation; ethanolamine degradation. Catalyzes the deamination of various vicinal amino-alcohols to oxo compounds. Allows this organism to utilize ethanolamine as the sole source of nitrogen and carbon in the presence of external vitamin B12. This chain is Ethanolamine ammonia-lyase small subunit, found in Pseudomonas fluorescens (strain ATCC BAA-477 / NRRL B-23932 / Pf-5).